Reading from the N-terminus, the 111-residue chain is Cell division protein FtsB (111 aa).

The Cytoplasmic segment spans residues 1 to 3 (MGK). A helical membrane pass occupies residues 4 to 21 (LTLLLLILLGWLQYSLWL). Residues 22–111 (GKNGIHDYVR…TNTPSNNIQR (90 aa)) are Periplasmic-facing. Residues 33–63 (KDDVVVQQGNNAKLKDRNEQLFAEIDDLNGG) are a coiled coil. Positions 90–111 (ESNHRNANTAPSTNTPSNNIQR) are disordered. Over residues 95 to 111 (NANTAPSTNTPSNNIQR) the composition is skewed to low complexity.

It belongs to the FtsB family. As to quaternary structure, part of a complex composed of FtsB, FtsL and FtsQ.

It is found in the cell inner membrane. Essential cell division protein. May link together the upstream cell division proteins, which are predominantly cytoplasmic, with the downstream cell division proteins, which are predominantly periplasmic. This is Cell division protein FtsB from Pectobacterium carotovorum subsp. carotovorum (strain PC1).